We begin with the raw amino-acid sequence, 245 residues long: 4-hydroxy-tetrahydrodipicolinate reductase (245 aa).

Residues 7-12 (GARGKV), 75-77 (GTT), and 102-105 (APNF) contribute to the NAD(+) site. His-132 (proton donor/acceptor) is an active-site residue. His-133 contacts (S)-2,3,4,5-tetrahydrodipicolinate. The active-site Proton donor is Lys-136. 142-143 (GT) is a binding site for (S)-2,3,4,5-tetrahydrodipicolinate.

Belongs to the DapB family.

The protein resides in the cytoplasm. It carries out the reaction (S)-2,3,4,5-tetrahydrodipicolinate + NAD(+) + H2O = (2S,4S)-4-hydroxy-2,3,4,5-tetrahydrodipicolinate + NADH + H(+). The catalysed reaction is (S)-2,3,4,5-tetrahydrodipicolinate + NADP(+) + H2O = (2S,4S)-4-hydroxy-2,3,4,5-tetrahydrodipicolinate + NADPH + H(+). It participates in amino-acid biosynthesis; L-lysine biosynthesis via DAP pathway; (S)-tetrahydrodipicolinate from L-aspartate: step 4/4. Catalyzes the conversion of 4-hydroxy-tetrahydrodipicolinate (HTPA) to tetrahydrodipicolinate. In Mycolicibacterium vanbaalenii (strain DSM 7251 / JCM 13017 / BCRC 16820 / KCTC 9966 / NRRL B-24157 / PYR-1) (Mycobacterium vanbaalenii), this protein is 4-hydroxy-tetrahydrodipicolinate reductase.